A 142-amino-acid polypeptide reads, in one-letter code: Photosystem II extrinsic protein U (142 aa).

A signal peptide spans 1–29; that stretch reads MKGLVRLLTVFSLLLGCWGWLGTTQIAQA.

Belongs to the PsbU family. PSII is composed of 1 copy each of membrane proteins PsbA, PsbB, PsbC, PsbD, PsbE, PsbF, PsbH, PsbI, PsbJ, PsbK, PsbL, PsbM, PsbT, PsbX, PsbY, PsbZ, Psb30/Ycf12, peripheral proteins PsbO, CyanoQ (PsbQ), PsbU, PsbV and a large number of cofactors. It forms dimeric complexes.

It is found in the cellular thylakoid membrane. Functionally, one of the extrinsic, lumenal subunits of photosystem II (PSII). PSII is a light-driven water plastoquinone oxidoreductase, using light energy to abstract electrons from H(2)O, generating a proton gradient subsequently used for ATP formation. The extrinsic proteins stabilize the structure of photosystem II oxygen-evolving complex (OEC), the ion environment of oxygen evolution and protect the OEC against heat-induced inactivation. This is Photosystem II extrinsic protein U from Nostoc sp. (strain PCC 7120 / SAG 25.82 / UTEX 2576).